The sequence spans 70 residues: Peptide BmKn1 (70 aa).

The signal sequence occupies residues 1 to 23; the sequence is MKSQTFFLLFLVVLLLAISQSEA. Phe36 carries the phenylalanine amide modification. The propeptide occupies 40 to 70; the sequence is SMRDMDTMKYLYDPSLSAADLKTLQKLMENY.

It belongs to the non-disulfide-bridged peptide (NDBP) superfamily. Short antimicrobial peptide (group 4) family. Expressed by the venom gland.

It is found in the secreted. Its subcellular location is the target cell membrane. Functionally, antibacterial peptide. In Olivierus martensii (Manchurian scorpion), this protein is Peptide BmKn1.